The primary structure comprises 350 residues: Very-long-chain 3-oxoacyl-CoA reductase (350 aa).

The helical transmembrane segment at 28 to 48 (SLVLLAGIGALSVGTFALRLV) threads the bilayer. Residues Val-79, Asp-134, Asn-161, Lys-196, Tyr-228, Lys-232, Val-261, and Ser-263 each coordinate NADP(+). The active-site Proton donor is the Tyr-228. Lys-232 functions as the Lowers pKa of active site Tyr in the catalytic mechanism.

Belongs to the short-chain dehydrogenases/reductases (SDR) family.

It localises to the endoplasmic reticulum membrane. It carries out the reaction a very-long-chain (3R)-3-hydroxyacyl-CoA + NADP(+) = a very-long-chain 3-oxoacyl-CoA + NADPH + H(+). It functions in the pathway lipid metabolism; fatty acid biosynthesis. Component of the microsomal membrane bound fatty acid elongation system, which produces the 26-carbon very long-chain fatty acids (VLCFA) from palmitate. Catalyzes the reduction of the 3-ketoacyl-CoA intermediate that is formed in each cycle of fatty acid elongation. VLCFAs serve as precursors for ceramide and sphingolipids. The polypeptide is Very-long-chain 3-oxoacyl-CoA reductase (Mycosarcoma maydis (Corn smut fungus)).